Consider the following 637-residue polypeptide: Phosphomethylpyrimidine synthase (637 aa).

Residues asparagine 242, methionine 271, tyrosine 300, histidine 336, 356–358, 397–400, and glutamate 436 contribute to the substrate site; these read SRG and DGLR. Histidine 440 provides a ligand contact to Zn(2+). Tyrosine 463 serves as a coordination point for substrate. Residue histidine 504 coordinates Zn(2+). [4Fe-4S] cluster contacts are provided by cysteine 584, cysteine 587, and cysteine 592.

It belongs to the ThiC family. As to quaternary structure, homodimer. [4Fe-4S] cluster serves as cofactor.

It catalyses the reaction 5-amino-1-(5-phospho-beta-D-ribosyl)imidazole + S-adenosyl-L-methionine = 4-amino-2-methyl-5-(phosphooxymethyl)pyrimidine + CO + 5'-deoxyadenosine + formate + L-methionine + 3 H(+). It functions in the pathway cofactor biosynthesis; thiamine diphosphate biosynthesis. Its function is as follows. Catalyzes the synthesis of the hydroxymethylpyrimidine phosphate (HMP-P) moiety of thiamine from aminoimidazole ribotide (AIR) in a radical S-adenosyl-L-methionine (SAM)-dependent reaction. The chain is Phosphomethylpyrimidine synthase from Bordetella bronchiseptica (strain ATCC BAA-588 / NCTC 13252 / RB50) (Alcaligenes bronchisepticus).